The primary structure comprises 170 residues: Acireductone dioxygenase (170 aa).

Fe(2+)-binding residues include His99, His101, Glu105, and His144. The Ni(2+) site is built by His99, His101, Glu105, and His144.

The protein belongs to the acireductone dioxygenase (ARD) family. As to quaternary structure, monomer. The cofactor is Fe(2+). Ni(2+) serves as cofactor.

The catalysed reaction is 1,2-dihydroxy-5-(methylsulfanyl)pent-1-en-3-one + O2 = 3-(methylsulfanyl)propanoate + CO + formate + 2 H(+). It carries out the reaction 1,2-dihydroxy-5-(methylsulfanyl)pent-1-en-3-one + O2 = 4-methylsulfanyl-2-oxobutanoate + formate + 2 H(+). Its pathway is amino-acid biosynthesis; L-methionine biosynthesis via salvage pathway; L-methionine from S-methyl-5-thio-alpha-D-ribose 1-phosphate: step 5/6. In terms of biological role, catalyzes 2 different reactions between oxygen and the acireductone 1,2-dihydroxy-3-keto-5-methylthiopentene (DHK-MTPene) depending upon the metal bound in the active site. Fe-containing acireductone dioxygenase (Fe-ARD) produces formate and 2-keto-4-methylthiobutyrate (KMTB), the alpha-ketoacid precursor of methionine in the methionine recycle pathway. Ni-containing acireductone dioxygenase (Ni-ARD) produces methylthiopropionate, carbon monoxide and formate, and does not lie on the methionine recycle pathway. This is Acireductone dioxygenase from Bacillus cytotoxicus (strain DSM 22905 / CIP 110041 / 391-98 / NVH 391-98).